The following is a 374-amino-acid chain: Conserved virulence factor C (374 aa).

Belongs to the CvfC family.

In terms of biological role, required for hemolysin production. The sequence is that of Conserved virulence factor C (cvfC) from Staphylococcus aureus (strain MRSA252).